Here is a 298-residue protein sequence, read N- to C-terminus: Ribosomal RNA small subunit methyltransferase A (298 aa).

Residues asparagine 35, leucine 37, glycine 62, glutamate 83, aspartate 108, and asparagine 133 each coordinate S-adenosyl-L-methionine.

Belongs to the class I-like SAM-binding methyltransferase superfamily. rRNA adenine N(6)-methyltransferase family. RsmA subfamily.

The protein resides in the cytoplasm. The enzyme catalyses adenosine(1518)/adenosine(1519) in 16S rRNA + 4 S-adenosyl-L-methionine = N(6)-dimethyladenosine(1518)/N(6)-dimethyladenosine(1519) in 16S rRNA + 4 S-adenosyl-L-homocysteine + 4 H(+). Specifically dimethylates two adjacent adenosines (A1518 and A1519) in the loop of a conserved hairpin near the 3'-end of 16S rRNA in the 30S particle. May play a critical role in biogenesis of 30S subunits. The chain is Ribosomal RNA small subunit methyltransferase A from Streptococcus pyogenes serotype M4 (strain MGAS10750).